A 975-amino-acid polypeptide reads, in one-letter code: Glycine dehydrogenase (decarboxylating) (975 aa).

Lysine 723 carries the N6-(pyridoxal phosphate)lysine modification.

This sequence belongs to the GcvP family. The glycine cleavage system is composed of four proteins: P, T, L and H. Requires pyridoxal 5'-phosphate as cofactor.

The enzyme catalyses N(6)-[(R)-lipoyl]-L-lysyl-[glycine-cleavage complex H protein] + glycine + H(+) = N(6)-[(R)-S(8)-aminomethyldihydrolipoyl]-L-lysyl-[glycine-cleavage complex H protein] + CO2. The glycine cleavage system catalyzes the degradation of glycine. The P protein binds the alpha-amino group of glycine through its pyridoxal phosphate cofactor; CO(2) is released and the remaining methylamine moiety is then transferred to the lipoamide cofactor of the H protein. The protein is Glycine dehydrogenase (decarboxylating) of Burkholderia thailandensis (strain ATCC 700388 / DSM 13276 / CCUG 48851 / CIP 106301 / E264).